The primary structure comprises 367 residues: 3-ketodihydrosphingosine reductase ksrA (367 aa).

The helical transmembrane segment at 12 to 32 (ASPATLGISLILCGFIVYSVS) threads the bilayer. NADPH is bound by residues Gly-53, Ser-55, Gly-57, Arg-78, Lys-82, Asp-108, and Leu-109. The GXSXG signature appears at 53–57 (GGSDG). Residues 193–213 (LIFTCSTLAFVSIAGYAPYSP) form a helical membrane-spanning segment. The active-site Proton acceptor is Tyr-211. 3 residues coordinate NADP(+): Tyr-211, Lys-215, and Ile-259. Lys-215 acts as the Lowers pKa of active site Tyr in catalysis.

Belongs to the short-chain dehydrogenases/reductases (SDR) family.

The protein localises to the endoplasmic reticulum membrane. It catalyses the reaction sphinganine + NADP(+) = 3-oxosphinganine + NADPH + H(+). The protein operates within lipid metabolism; sphingolipid metabolism. In terms of biological role, catalyzes the reduction of 3'-oxosphinganine (3-ketodihydrosphingosine/KDS) to sphinganine (dihydrosphingosine/DHS), the second step of de novo sphingolipid biosynthesis. In Aspergillus fumigatus (strain ATCC MYA-4609 / CBS 101355 / FGSC A1100 / Af293) (Neosartorya fumigata), this protein is 3-ketodihydrosphingosine reductase ksrA.